A 150-amino-acid chain; its full sequence is Transthyretin (150 aa).

A signal peptide spans 1–20 (MAFHSTLLVFLAGLVFLSEA). A Sulfocysteine modification is found at Cys-33. 3 residues coordinate L-thyroxine: Lys-38, Glu-77, and Ser-140.

It belongs to the transthyretin family. In terms of assembly, homotetramer. Dimer of dimers. In the homotetramer, subunits assemble around a central channel that can accommodate two ligand molecules. Sulfonation of the reactive cysteine Cys-33 enhances the stability of the native conformation of TTR, avoiding misassembly of the protein leading to amyloid formation. As to expression, detected in serum (at protein level). Detected in liver and choroid plexus.

Its subcellular location is the secreted. Thyroid hormone-binding protein. Probably transports thyroxine from the bloodstream to the brain. The protein is Transthyretin (TTR) of Gallus gallus (Chicken).